Here is a 299-residue protein sequence, read N- to C-terminus: 4-hydroxy-tetrahydrodipicolinate synthase (299 aa).

Pyruvate is bound at residue threonine 50. Residue tyrosine 139 is the Proton donor/acceptor of the active site. Catalysis depends on lysine 167, which acts as the Schiff-base intermediate with substrate. Valine 209 lines the pyruvate pocket.

This sequence belongs to the DapA family. As to quaternary structure, homotetramer; dimer of dimers.

It is found in the cytoplasm. It catalyses the reaction L-aspartate 4-semialdehyde + pyruvate = (2S,4S)-4-hydroxy-2,3,4,5-tetrahydrodipicolinate + H2O + H(+). The protein operates within amino-acid biosynthesis; L-lysine biosynthesis via DAP pathway; (S)-tetrahydrodipicolinate from L-aspartate: step 3/4. Its function is as follows. Catalyzes the condensation of (S)-aspartate-beta-semialdehyde [(S)-ASA] and pyruvate to 4-hydroxy-tetrahydrodipicolinate (HTPA). The chain is 4-hydroxy-tetrahydrodipicolinate synthase from Synechococcus elongatus (strain ATCC 33912 / PCC 7942 / FACHB-805) (Anacystis nidulans R2).